Here is a 236-residue protein sequence, read N- to C-terminus: Small ribosomal subunit protein uS2c (236 aa).

Belongs to the universal ribosomal protein uS2 family.

Its subcellular location is the plastid. The protein localises to the chloroplast. The chain is Small ribosomal subunit protein uS2c (rps2) from Calycanthus floridus var. glaucus (Eastern sweetshrub).